Reading from the N-terminus, the 143-residue chain is Large ribosomal subunit protein uL11 (143 aa).

It belongs to the universal ribosomal protein uL11 family. Part of the ribosomal stalk of the 50S ribosomal subunit. Interacts with L10 and the large rRNA to form the base of the stalk. L10 forms an elongated spine to which L12 dimers bind in a sequential fashion forming a multimeric L10(L12)X complex. One or more lysine residues are methylated.

Forms part of the ribosomal stalk which helps the ribosome interact with GTP-bound translation factors. The polypeptide is Large ribosomal subunit protein uL11 (Burkholderia multivorans (strain ATCC 17616 / 249)).